The chain runs to 210 residues: Uracil phosphoribosyltransferase (210 aa).

Residues Arg78, Arg103, and 130 to 138 contribute to the 5-phospho-alpha-D-ribose 1-diphosphate site; that span reads DPMLATGGT. Uracil contacts are provided by residues Ile193 and 198-200; that span reads GDA. Asp199 is a 5-phospho-alpha-D-ribose 1-diphosphate binding site.

This sequence belongs to the UPRTase family. Mg(2+) serves as cofactor.

It catalyses the reaction UMP + diphosphate = 5-phospho-alpha-D-ribose 1-diphosphate + uracil. The protein operates within pyrimidine metabolism; UMP biosynthesis via salvage pathway; UMP from uracil: step 1/1. With respect to regulation, allosterically activated by GTP. In terms of biological role, catalyzes the conversion of uracil and 5-phospho-alpha-D-ribose 1-diphosphate (PRPP) to UMP and diphosphate. This is Uracil phosphoribosyltransferase from Xanthomonas axonopodis pv. citri (strain 306).